The primary structure comprises 218 residues: Pyridoxine/pyridoxamine 5'-phosphate oxidase (218 aa).

Residues 12 to 15 (RLSY) and Arg-70 each bind substrate. FMN contacts are provided by residues 65 to 70 (RTVLLR), 80 to 81 (YT), Lys-87, and Gln-109. Tyr-127, Arg-131, and Ser-135 together coordinate substrate. FMN is bound by residues 145–146 (QS) and Trp-191. 197 to 199 (RLH) provides a ligand contact to substrate. Arg-201 contacts FMN.

This sequence belongs to the pyridoxamine 5'-phosphate oxidase family. As to quaternary structure, homodimer. The cofactor is FMN.

The catalysed reaction is pyridoxamine 5'-phosphate + O2 + H2O = pyridoxal 5'-phosphate + H2O2 + NH4(+). It catalyses the reaction pyridoxine 5'-phosphate + O2 = pyridoxal 5'-phosphate + H2O2. Its pathway is cofactor metabolism; pyridoxal 5'-phosphate salvage; pyridoxal 5'-phosphate from pyridoxamine 5'-phosphate: step 1/1. The protein operates within cofactor metabolism; pyridoxal 5'-phosphate salvage; pyridoxal 5'-phosphate from pyridoxine 5'-phosphate: step 1/1. Catalyzes the oxidation of either pyridoxine 5'-phosphate (PNP) or pyridoxamine 5'-phosphate (PMP) into pyridoxal 5'-phosphate (PLP). This is Pyridoxine/pyridoxamine 5'-phosphate oxidase from Acinetobacter baumannii (strain AB0057).